The primary structure comprises 292 residues: uncharacterized protein (292 aa).

This is an uncharacterized protein from Escherichia coli (strain K12).